Consider the following 126-residue polypeptide: MAVSKNEILETISNMTVMEVVELIEAMEEKFNVSAAAAAVAVAAPAAGAGAAAAEEQTEFTVVMTSFGSNKVNVIKAIRGITGLGLKEAKDLVEGAPSTVKEGVSKDEAASIKKELEEAGATVEVK.

It belongs to the bacterial ribosomal protein bL12 family. As to quaternary structure, homodimer. Part of the ribosomal stalk of the 50S ribosomal subunit. Forms a multimeric L10(L12)X complex, where L10 forms an elongated spine to which 2 to 4 L12 dimers bind in a sequential fashion. Binds GTP-bound translation factors.

Its function is as follows. Forms part of the ribosomal stalk which helps the ribosome interact with GTP-bound translation factors. Is thus essential for accurate translation. The polypeptide is Large ribosomal subunit protein bL12 (Legionella pneumophila (strain Paris)).